A 441-amino-acid chain; its full sequence is Ribulose bisphosphate carboxylase large chain (441 aa).

K5 is subject to N6,N6,N6-trimethyllysine. A substrate-binding site is contributed by T164. The active-site Proton acceptor is the K166. K168 is a substrate binding site. Mg(2+)-binding residues include K192, D194, and E195. An N6-carboxylysine modification is found at K192. H285 functions as the Proton acceptor in the catalytic mechanism. Substrate is bound by residues R286, H318, and S370.

It belongs to the RuBisCO large chain family. Type I subfamily. Heterohexadecamer of 8 large chains and 8 small chains; disulfide-linked. The disulfide link is formed within the large subunit homodimers. Mg(2+) is required as a cofactor. The disulfide bond which can form in the large chain dimeric partners within the hexadecamer appears to be associated with oxidative stress and protein turnover.

It is found in the plastid. The protein resides in the chloroplast. The catalysed reaction is 2 (2R)-3-phosphoglycerate + 2 H(+) = D-ribulose 1,5-bisphosphate + CO2 + H2O. It catalyses the reaction D-ribulose 1,5-bisphosphate + O2 = 2-phosphoglycolate + (2R)-3-phosphoglycerate + 2 H(+). RuBisCO catalyzes two reactions: the carboxylation of D-ribulose 1,5-bisphosphate, the primary event in carbon dioxide fixation, as well as the oxidative fragmentation of the pentose substrate in the photorespiration process. Both reactions occur simultaneously and in competition at the same active site. The chain is Ribulose bisphosphate carboxylase large chain from Hemionitis engywookii (Fendler's false cloak fern).